A 199-amino-acid chain; its full sequence is Cytochrome b (199 aa).

The next 4 helical transmembrane spans lie at 1–8, 32–53, 68–88, and 133–153; these read LTGLFLAM, WLIRNLHANGASFFFICIYFHI, WNIGVVLLLLVMMTAFVGYVL, and FFAFHFLFPFVILAMTILHLL. Residues H38 and H52 each contribute to the heme b site. Heme b is bound by residues H137 and H151. H156 lines the a ubiquinone pocket. The helical transmembrane segment at 181-199 threads the bilayer; sequence YKDLLGFAILLVALASLAH.

The protein belongs to the cytochrome b family. In terms of assembly, the cytochrome bc1 complex contains 3 respiratory subunits (MT-CYB, CYC1 and UQCRFS1), 2 core proteins (UQCRC1 and UQCRC2) and probably 6 low-molecular weight proteins. Requires heme b as cofactor.

The protein localises to the mitochondrion inner membrane. In terms of biological role, component of the ubiquinol-cytochrome c reductase complex (complex III or cytochrome b-c1 complex) that is part of the mitochondrial respiratory chain. The b-c1 complex mediates electron transfer from ubiquinol to cytochrome c. Contributes to the generation of a proton gradient across the mitochondrial membrane that is then used for ATP synthesis. This is Cytochrome b (mt-cyb) from Sarda chiliensis (Pacific bonito).